The chain runs to 694 residues: Cyclic nucleotide-gated channel beta-3 (694 aa).

The Cytoplasmic portion of the chain corresponds to 1-210 (MLKSLTVKFN…SIDSYTDRVY (210 aa)). Disordered stretches follow at residues 24 to 82 (CPNL…DPEC) and 146 to 177 (ENFP…KEHQ). Composition is skewed to polar residues over residues 26 to 40 (NLSS…QGDN) and 153 to 168 (ASSQ…PKQE). The helical transmembrane segment at 211–234 (LLWLLLVTIAYNWNCWLLPVRLVF) threads the bilayer. Over 235-241 (PCQTPDN) the chain is Extracellular. The chain crosses the membrane as a helical span at residues 242–262 (KNYWIITDIVCDIIYLCDILL). Residues 263–291 (IQPRLQFVRGGEIIVDSNELKRNYRSSTK) lie on the Cytoplasmic side of the membrane. A helical membrane pass occupies residues 292-309 (FRMDVASLLPFEVLYIFF). The Extracellular portion of the chain corresponds to 310–312 (GVN). A helical membrane pass occupies residues 313–327 (PIFRANRILKYTSFF). The Cytoplasmic segment spans residues 328–340 (EFNHHLESIMDKA). The interval 340–439 (AYVYRVIRTT…IGQMRDVIGA (100 aa)) is ion conduction pathway. The helical transmembrane segment at 341-363 (YVYRVIRTTGYLLFLLHINACVY) threads the bilayer. The Extracellular portion of the chain corresponds to 364–385 (YWASDYEGIGSTKWVYNGEGNK). Helical transmembrane passes span 386-412 (YLRC…SFEI) and 413-437 (VFQF…RDVI). Residues 399 to 402 (TIGG) are selectivity filter. Residues 438–694 (GAATANQNYF…KGKRKTTTQK (257 aa)) lie on the Cytoplasmic side of the membrane. The interval 442–518 (ANQNYFQACM…SIIDKVELFK (77 aa)) is C-linker. A cyclic nucleotide-binding domain region spans residues 522 to 638 (TQMIYDLLLR…LLMKKAKILL (117 aa)). Residues glycine 583, glutamate 584, arginine 596, and threonine 597 each contribute to the 3',5'-cyclic GMP site.

This sequence belongs to the cyclic nucleotide-gated cation channel (TC 1.A.1.5) family. CNGB3 subfamily. As to quaternary structure, forms heterotetrameric channels composed of CNGA3 and CNGB3 subunits with 3:1 stoichiometry. As to expression, small subset of retinal photoreceptor cells and testis.

Its subcellular location is the cell membrane. It carries out the reaction Ca(2+)(in) = Ca(2+)(out). It catalyses the reaction Na(+)(in) = Na(+)(out). The enzyme catalyses K(+)(in) = K(+)(out). The catalysed reaction is NH4(+)(in) = NH4(+)(out). It carries out the reaction Rb(+)(in) = Rb(+)(out). It catalyses the reaction Li(+)(in) = Li(+)(out). The enzyme catalyses Cs(+)(in) = Cs(+)(out). In terms of biological role, pore-forming subunit of the cone cyclic nucleotide-gated channel. Mediates cone photoresponses at bright light converting transient changes in intracellular cGMP levels into electrical signals. In the dark, cGMP levels are high and keep the channel open enabling a steady inward current carried by Na(+) and Ca(2+) ions that leads to membrane depolarization and neurotransmitter release from synaptic terminals. Upon photon absorption cGMP levels decline leading to channel closure and membrane hyperpolarization that ultimately slows neurotransmitter release and signals the presence of light, the end point of the phototransduction cascade. Conducts cGMP- and cAMP-gated ion currents, with permeability for monovalent and divalent cations. The sequence is that of Cyclic nucleotide-gated channel beta-3 from Mus musculus (Mouse).